Reading from the N-terminus, the 72-residue chain is Conotoxin VnMKLT2-011 (72 aa).

The signal sequence occupies residues 1 to 23; the sequence is MMKLTCVLIIAVLFLTACQLTTA. Positions 24 to 42 are excised as a propeptide; that stretch reads ETRDEYRAVRSSDEVRNSR. Disulfide bonds link Cys44/Cys57, Cys51/Cys62, and Cys56/Cys71.

Belongs to the conotoxin O1 superfamily. Expressed by the venom duct.

It is found in the secreted. This is Conotoxin VnMKLT2-011 from Conus ventricosus (Mediterranean cone).